Consider the following 30-residue polypeptide: DCPSDWSPYEGHCYKHFIKWMNNEDAERFC.

The 30-residue stretch at aspartate 1 to cysteine 30 folds into the C-type lectin domain. Cysteine 2 and cysteine 13 are joined by a disulfide.

Belongs to the snaclec family. Heterodimer of subunits A and B; disulfide-linked. In terms of tissue distribution, expressed by the venom gland.

The protein resides in the secreted. Its function is as follows. Anticoagulant protein which binds to the gamma-carboxyglutamic acid-domain regions of factors IX (F9) and factor X (F10) in the presence of calcium with a 1 to 1 stoichiometry. This Bothrops jararaca (Jararaca) protein is Snaclec coagulation factor IX/factor X-binding protein subunit A.